The primary structure comprises 231 residues: 5'-methylthioadenosine/S-adenosylhomocysteine nucleosidase (231 aa).

Glu12 acts as the Proton acceptor in catalysis. Substrate is bound by residues Gly78, Ile153, and 174–175 (ME). Asp198 (proton donor) is an active-site residue.

The protein belongs to the PNP/UDP phosphorylase family. MtnN subfamily.

The catalysed reaction is S-adenosyl-L-homocysteine + H2O = S-(5-deoxy-D-ribos-5-yl)-L-homocysteine + adenine. It catalyses the reaction S-methyl-5'-thioadenosine + H2O = 5-(methylsulfanyl)-D-ribose + adenine. The enzyme catalyses 5'-deoxyadenosine + H2O = 5-deoxy-D-ribose + adenine. Its pathway is amino-acid biosynthesis; L-methionine biosynthesis via salvage pathway; S-methyl-5-thio-alpha-D-ribose 1-phosphate from S-methyl-5'-thioadenosine (hydrolase route): step 1/2. Catalyzes the irreversible cleavage of the glycosidic bond in both 5'-methylthioadenosine (MTA) and S-adenosylhomocysteine (SAH/AdoHcy) to adenine and the corresponding thioribose, 5'-methylthioribose and S-ribosylhomocysteine, respectively. Also cleaves 5'-deoxyadenosine, a toxic by-product of radical S-adenosylmethionine (SAM) enzymes, into 5-deoxyribose and adenine. This is 5'-methylthioadenosine/S-adenosylhomocysteine nucleosidase from Shewanella sp. (strain W3-18-1).